The following is a 405-amino-acid chain: Phosphoglycerate kinase (405 aa).

Residues 24–26 (DFN), Arg40, 63–66 (HLGR), Arg122, and Arg162 contribute to the substrate site. ATP is bound by residues Lys213, Glu332, and 361–364 (GGDS).

It belongs to the phosphoglycerate kinase family. In terms of assembly, monomer.

It is found in the cytoplasm. The catalysed reaction is (2R)-3-phosphoglycerate + ATP = (2R)-3-phospho-glyceroyl phosphate + ADP. Its pathway is carbohydrate degradation; glycolysis; pyruvate from D-glyceraldehyde 3-phosphate: step 2/5. The chain is Phosphoglycerate kinase from Corynebacterium diphtheriae (strain ATCC 700971 / NCTC 13129 / Biotype gravis).